The chain runs to 7481 residues: Polyketide synthase GfsA (7481 aa).

The loading module (LM) stretch occupies residues 24–1020 (ASDEPIAVIG…ETAEFVRARL (997 aa)). The Ketosynthase family 3 (KS3) 1 domain maps to 26-451 (DEPIAVIGLS…GTNCHVVVSA (426 aa)). The tract at residues 60 to 80 (RVPADRETPPSTEEESADGEA) is disordered. Glutamine 197 acts as the For decarboxylation activity of LM in catalysis. Serine 662 acts as the For acyltransferase activity of LM in catalysis. Residues 945-1020 (PDPVETVRQL…ETAEFVRARL (76 aa)) enclose the Carrier 1 domain. An O-(pantetheine 4'-phosphoryl)serine modification is found at serine 980. One can recognise a Ketosynthase family 3 (KS3) 2 domain in the interval 1038–1454 (DEPIAVVAMS…GTNAHVILEQ (417 aa)). 4 module regions span residues 1038–2517 (DEPI…AGEL), 2538–4063 (EDPI…LQRI), 4084–5636 (DDPI…GSEV), and 5655–7400 (DEPV…GEQL). Residues cysteine 1201, histidine 1336, and histidine 1376 each act as for beta-ketoacyl synthase 1 activity in the active site. A Carrier 2 domain is found at 2442–2517 (RVLLDLVRGR…ALAEHLAGEL (76 aa)). Serine 2477 carries the O-(pantetheine 4'-phosphoryl)serine modification. The 427-residue stretch at 2538–2964 (EDPIAIVAMS…GTNAHVIIEE (427 aa)) folds into the Ketosynthase family 3 (KS3) 3 domain. Catalysis depends on for beta-ketoacyl synthase 2 activity residues cysteine 2711, histidine 2846, and histidine 2886. The region spanning 3988–4063 (QALQDLVLTE…ATTEYLLQRI (76 aa)) is the Carrier 3 domain. Position 4023 is an O-(pantetheine 4'-phosphoryl)serine (serine 4023). Residues 4084–4514 (DDPIAIVAMG…GTNAHVILEQ (431 aa)) form the Ketosynthase family 3 (KS3) 4 domain. Residues cysteine 4261, histidine 4396, and histidine 4436 each act as for beta-ketoacyl synthase 3 activity in the active site. Residues 5561–5636 (TALLDLIRGQ…ALAEYVGSEV (76 aa)) form the Carrier 4 domain. Serine 5596 carries the post-translational modification O-(pantetheine 4'-phosphoryl)serine. A Ketosynthase family 3 (KS3) 5 domain is found at 5655–6081 (DEPVAIIGMS…GTNAHVILEQ (427 aa)). Residues cysteine 5828, histidine 5963, and histidine 6003 each act as for beta-ketoacyl synthase 4 activity in the active site. An N-terminal hotdog fold region spans residues 6561–6685 (HPLLGAAVAL…GVLASGAATV (125 aa)). The 281-residue stretch at 6561–6841 (HPLLGAAVAL…LRPVSADTIA (281 aa)) folds into the PKS/mFAS DH domain. The active-site Proton acceptor; for dehydratase activity is the histidine 6593. Positions 6700-6841 (ATAVDIDGLY…LRPVSADTIA (142 aa)) are C-terminal hotdog fold. The active-site Proton donor; for dehydratase activity is the aspartate 6761. In terms of domain architecture, Carrier 5 spans 7325 to 7400 (QELLDFVCEH…LLAGHIGEQL (76 aa)). Serine 7360 is modified (O-(pantetheine 4'-phosphoryl)serine).

As to quaternary structure, homodimer. The loading module (LM, residues 13-926) dimerizes. LM cross-links to its cognate acyl-carrier domain in a manner that seems physiological; mutation of residues in the 2 domains alters reactions efficiency in a manner predicted by the cross-linked crystal. It depends on pantetheine 4'-phosphate as a cofactor.

It functions in the pathway antibiotic biosynthesis. First protein in the synthesis of the 16-membered macrolide antibiotics FD-891 and FD-892. Composed of 5 modules; the first is a loading module (LM) that synthesizes a starter unit used by the first elongation module for polyketide chain elongation. The starter unit is extended by multiple rounds of addition of malonyl-CoA or methylmalonyl-CoA, and other modifications to help generate the final products. The loading module (residues 1-927, LM with an inactive acyltransferase domain) preferentially decarboxylates malonyl-GfsA acyl carrier protein of the LM (ACP-LM) over methylmalonyl-GfsA ACP-LM and has no activity on malonyl-CoA or methymalonyl-CoA. LM decarboxylates malonyl-ACP-LM better than the malonyl-ACP-1 module of GfsA (i.e. the next module in the same protein) and has no activity on other malonyl-ACP modules. This is Polyketide synthase GfsA from Streptomyces halstedii.